Consider the following 275-residue polypeptide: Succinate dehydrogenase [ubiquinone] iron-sulfur subunit, mitochondrial (275 aa).

The N-terminal 24 residues, 1 to 24 (MFSRRIQVLSPFLKHFVNRNARMM), are a transit peptide targeting the mitochondrion. A 2Fe-2S ferredoxin-type domain is found at 57–137 (PEVKPKLQKY…PTKIYPLPHC (81 aa)). The [2Fe-2S] cluster site is built by Cys98, Cys103, Cys106, and Cys118. One can recognise a 4Fe-4S ferredoxin-type domain in the interval 178–208 (DRAKLDGLYECILCACCSTSCPSYWWNSEEY). [4Fe-4S] cluster contacts are provided by Cys188, Cys191, and Cys194. Cys198 serves as a coordination point for [3Fe-4S] cluster. Trp203 serves as a coordination point for a ubiquinone. Positions 245 and 251 each coordinate [3Fe-4S] cluster. Cys255 contacts [4Fe-4S] cluster.

The protein belongs to the succinate dehydrogenase/fumarate reductase iron-sulfur protein family. In terms of assembly, component of complex II composed of four subunits: a flavoprotein (FP), an iron-sulfur protein (IP), and a cytochrome b composed of a large and a small subunit. It depends on [2Fe-2S] cluster as a cofactor. The cofactor is [3Fe-4S] cluster. [4Fe-4S] cluster is required as a cofactor.

It localises to the mitochondrion inner membrane. The enzyme catalyses a quinone + succinate = fumarate + a quinol. It functions in the pathway carbohydrate metabolism; tricarboxylic acid cycle; fumarate from succinate (eukaryal route): step 1/1. Its function is as follows. Iron-sulfur protein (IP) subunit of succinate dehydrogenase (SDH) that is involved in complex II of the mitochondrial electron transport chain and is responsible for transferring electrons from succinate to ubiquinone (coenzyme Q). The sequence is that of Succinate dehydrogenase [ubiquinone] iron-sulfur subunit, mitochondrial (sdh2) from Schizosaccharomyces pombe (strain 972 / ATCC 24843) (Fission yeast).